The sequence spans 202 residues: NADH-quinone oxidoreductase subunit B (202 aa).

Positions Met1 to Ser13 are enriched in polar residues. The tract at residues Met1 to Thr32 is disordered. Positions 81, 82, 146, and 176 each coordinate [4Fe-4S] cluster.

Belongs to the complex I 20 kDa subunit family. NDH-1 is composed of 14 different subunits. Subunits NuoB, C, D, E, F, and G constitute the peripheral sector of the complex. Requires [4Fe-4S] cluster as cofactor.

It localises to the cell inner membrane. It catalyses the reaction a quinone + NADH + 5 H(+)(in) = a quinol + NAD(+) + 4 H(+)(out). Its function is as follows. NDH-1 shuttles electrons from NADH, via FMN and iron-sulfur (Fe-S) centers, to quinones in the respiratory chain. The immediate electron acceptor for the enzyme in this species is believed to be ubiquinone. Couples the redox reaction to proton translocation (for every two electrons transferred, four hydrogen ions are translocated across the cytoplasmic membrane), and thus conserves the redox energy in a proton gradient. In Nitrobacter hamburgensis (strain DSM 10229 / NCIMB 13809 / X14), this protein is NADH-quinone oxidoreductase subunit B.